A 482-amino-acid polypeptide reads, in one-letter code: Islet cell autoantigen 1-like protein (482 aa).

An AH domain is found at 44–247 (ASDAELDAKL…TARMMSQIHE (204 aa)). Disordered stretches follow at residues 365-393 (TQECQTAFGSPSASLTSQEPSMGSEPLAH) and 427-449 (SHTDNQPVPSQSPKKLTRSPNNG). Polar residues-rich tracts occupy residues 366–385 (QECQTAFGSPSASLTSQEPS) and 428–449 (HTDNQPVPSQSPKKLTRSPNNG).

The sequence is that of Islet cell autoantigen 1-like protein (ICA1L) from Homo sapiens (Human).